Consider the following 245-residue polypeptide: Probable septum site-determining protein MinC (245 aa).

Positions 112–132 (ARERPLESAEPVAPKKPEKPP) are enriched in basic and acidic residues. The tract at residues 112–140 (ARERPLESAEPVAPKKPEKPPEPTVKPTR) is disordered.

The protein belongs to the MinC family. In terms of assembly, interacts with MinD and FtsZ.

Cell division inhibitor that blocks the formation of polar Z ring septums. Rapidly oscillates between the poles of the cell to destabilize FtsZ filaments that have formed before they mature into polar Z rings. Prevents FtsZ polymerization. The polypeptide is Probable septum site-determining protein MinC (Pseudomonas fluorescens (strain Pf0-1)).